The sequence spans 277 residues: Ubiquinone biosynthesis protein COQ4, mitochondrial (277 aa).

The N-terminal 14 residues, 1–14 (MLTKRALRTTDPYR), are a transit peptide targeting the mitochondrion. Zn(2+) contacts are provided by histidine 157, aspartate 158, histidine 161, and glutamate 173.

The protein belongs to the COQ4 family. Component of a multi-subunit COQ enzyme complex, composed of at least COQ3, COQ4, COQ5, COQ6, COQ7 and COQ9. Zn(2+) serves as cofactor.

Its subcellular location is the mitochondrion inner membrane. It catalyses the reaction a 4-hydroxy-3-methoxy-5-(all-trans-polyprenyl)benzoate + H(+) = a 2-methoxy-6-(all-trans-polyprenyl)phenol + CO2. The protein operates within cofactor biosynthesis; ubiquinone biosynthesis. Its function is as follows. Lyase that catalyzes the C1-decarboxylation of 4-hydroxy-3-methoxy-5-(all-trans-polyprenyl)benzoic acid into 2-methoxy-6-(all-trans-polyprenyl)phenol during ubiquinone biosynthesis. The sequence is that of Ubiquinone biosynthesis protein COQ4, mitochondrial from Ajellomyces capsulatus (strain NAm1 / WU24) (Darling's disease fungus).